We begin with the raw amino-acid sequence, 429 residues long: MFS-type efflux pump MSMEG_3705 (429 aa).

Transmembrane regions (helical) follow at residues 21–41 (AWAAVGVLALVGTLNYVDRFL), 59–79 (AIGVINGFGFLIVYAVMGIAV), 86–106 (GAFGAVVAGCLTLWGTMTMLG), 115–137 (LALTRVGVAIGEAGSTPAAHAYV), 150–170 (LAVITIAIPLASTASLLGGGL), 181–201 (FVIMGAVSVVLAPLVLLVVGV), 228–248 (FLIVVAGTAFISAAGYSLTTF), 264–284 (VGVEYGLATGAIGVLGLLIVG), 299–319 (LWIVVTLTLVLLPASVLAFVV), 327–347 (LFLALSYAIGTSYLAPSIAAI), 361–381 (AMFLFFNAVFGSVGPFVVGML), and 397–417 (ALLLLVAAMQLVGAICYWLAS).

This sequence belongs to the major facilitator superfamily.

The protein resides in the cell inner membrane. Probably plays a role in bacterial growth and resistance to antibiotics. This Mycolicibacterium smegmatis (strain ATCC 700084 / mc(2)155) (Mycobacterium smegmatis) protein is MFS-type efflux pump MSMEG_3705.